The chain runs to 489 residues: Glutamate--tRNA ligase (489 aa).

The 'HIGH' region signature appears at 11–21 (PSPTGHLHIGG). Zn(2+) contacts are provided by C108, C110, C136, and H138. The 'KMSKS' region signature appears at 253–257 (KLSKR). K256 provides a ligand contact to ATP.

It belongs to the class-I aminoacyl-tRNA synthetase family. Glutamate--tRNA ligase type 1 subfamily. As to quaternary structure, monomer. Zn(2+) serves as cofactor.

The protein resides in the cytoplasm. The catalysed reaction is tRNA(Glu) + L-glutamate + ATP = L-glutamyl-tRNA(Glu) + AMP + diphosphate. Its function is as follows. Catalyzes the attachment of glutamate to tRNA(Glu) in a two-step reaction: glutamate is first activated by ATP to form Glu-AMP and then transferred to the acceptor end of tRNA(Glu). In Geobacillus thermodenitrificans (strain NG80-2), this protein is Glutamate--tRNA ligase.